The primary structure comprises 378 residues: Quinolinate synthase (378 aa).

Histidine 59 and serine 80 together coordinate iminosuccinate. Cysteine 125 is a binding site for [4Fe-4S] cluster. Residues 151–153 (YAN) and serine 168 contribute to the iminosuccinate site. Cysteine 212 is a binding site for [4Fe-4S] cluster. Iminosuccinate-binding positions include 238 to 240 (HPE) and threonine 255. Cysteine 309 contacts [4Fe-4S] cluster.

The protein belongs to the quinolinate synthase family. Type 1 subfamily. [4Fe-4S] cluster is required as a cofactor.

Its subcellular location is the cytoplasm. It catalyses the reaction iminosuccinate + dihydroxyacetone phosphate = quinolinate + phosphate + 2 H2O + H(+). Its pathway is cofactor biosynthesis; NAD(+) biosynthesis; quinolinate from iminoaspartate: step 1/1. Its function is as follows. Catalyzes the condensation of iminoaspartate with dihydroxyacetone phosphate to form quinolinate. This Burkholderia thailandensis (strain ATCC 700388 / DSM 13276 / CCUG 48851 / CIP 106301 / E264) protein is Quinolinate synthase.